The primary structure comprises 547 residues: Chaperonin GroEL (547 aa).

ATP-binding positions include 30–33, Lys-51, 87–91, Gly-415, and Asp-496; these read TLGP and DGTTT. The segment at 527 to 547 is disordered; that stretch reads ENTPDMPAMPPGGMGGMGGMY. Residues 538 to 547 show a composition bias toward gly residues; sequence GGMGGMGGMY.

This sequence belongs to the chaperonin (HSP60) family. In terms of assembly, forms a cylinder of 14 subunits composed of two heptameric rings stacked back-to-back. Interacts with the co-chaperonin GroES.

The protein resides in the cytoplasm. It catalyses the reaction ATP + H2O + a folded polypeptide = ADP + phosphate + an unfolded polypeptide.. Its function is as follows. Together with its co-chaperonin GroES, plays an essential role in assisting protein folding. The GroEL-GroES system forms a nano-cage that allows encapsulation of the non-native substrate proteins and provides a physical environment optimized to promote and accelerate protein folding. The protein is Chaperonin GroEL of Chlorobium phaeovibrioides (strain DSM 265 / 1930) (Prosthecochloris vibrioformis (strain DSM 265)).